Here is a 344-residue protein sequence, read N- to C-terminus: RNA-binding protein squid (344 aa).

The disordered stretch occupies residues 1–55; the sequence is MAENKQVDTEINGEDFTKDVTADGPGSENGDAGAAGSTNGSSDNQSAASGQRDDD. The span at 36-49 shows a compositional bias: polar residues; it reads GSTNGSSDNQSAAS. 2 consecutive RRM domains span residues 56-138 and 136-213; these read RKLF…HGKI and GKIF…RATP. Position 148 is a phosphoserine (S148). Disordered stretches follow at residues 214-238 and 301-344; these read KPEN…RGGY and GGGG…HQPY. The segment at 215 to 254 is M9-like motif; that stretch reads PENQMMGGMRGGPRGGMRGGRGGYGGRGGYNNQWDGQGSY. Composition is skewed to gly residues over residues 222-238 and 301-337; these read GMRG…RGGY and GGGG…GGGR. An M9 motif region spans residues 300 to 338; the sequence is GGGGGGNMGGGRGGPRGGGGPKGGGGFNGGKQRGGGGRQ.

In terms of assembly, interacts with bru1/Bruno; the interaction is direct but weak, and may play a role in regulation of grk mRNA localization and translation. Interacts (probably via M9 and M9-like motifs) with Tnpo/Transportin; the interaction is direct and is involved in nuclear localization. Interacts with fs(1)K10 (via N-terminus); may be involved in localization of sqd in the oocyte during oogenesis. As to quaternary structure, interacts (via C-terminus) with Hrb27C; the interaction is RNA dependent. Does not interact with Tnpo/Transportin. Interacts with fs(1)K10 (via N-terminus); may be involved in localization of sqd in the oocyte during oogenesis. In terms of assembly, interacts (probably via M9-like motif) with Tnpo/Transportin; the interaction is direct and is involved in nuclear localization. Interacts with fs(1)K10 (via N-terminus); may be involved in localization of sqd in the oocyte during oogenesis.

It localises to the nucleus. It is found in the cytoplasm. Component of ribonucleosomes. Could be needed to organize a concentration gradient of a dorsalizing morphogen (Dm) originating in the germinal vesicle. At least one of the isoforms is essential in somatic tissues. Interacts with grk mRNA (via 3' UTR) and involved in its localization to the dorsal anterior region of the oocyte during dorsal-ventral axis determination; may function as a ribonuclear protein complex together with otu and Hrb27C. Required for polytene chromosome dispersal in nurse cells during oogenesis; nuclear isoforms play a greater role in this than cytoplasmic isoforms. Its function is as follows. Required nonredundantly with isoform A/sqdA for dorsoventral pattern determination during oogenesis. May be important in somatic tissues. Functionally, required nonredundantly with isoform B/SqdS for dorsoventral pattern determination during oogenesis. In terms of biological role, may lack a role in dorsoventral pattern determination during oogenesis. May be important in somatic tissues. In Drosophila melanogaster (Fruit fly), this protein is RNA-binding protein squid.